We begin with the raw amino-acid sequence, 164 residues long: HTH-type transcriptional regulator IscR (164 aa).

One can recognise an HTH rrf2-type domain in the interval 2-131; sequence RLTSKGRYAV…SSISLEELVN (130 aa). Positions 28-51 form a DNA-binding region, H-T-H motif; it reads LADISERQGISLSYLEQLFSRLRK. Positions 92, 98, and 104 each coordinate [2Fe-2S] cluster. A disordered region spans residues 141–164; sequence RQDNDKRRAPNGRAQETINVNLRP. The span at 154-164 shows a compositional bias: polar residues; sequence AQETINVNLRP.

It depends on [2Fe-2S] cluster as a cofactor.

Functionally, regulates the transcription of several operons and genes involved in the biogenesis of Fe-S clusters and Fe-S-containing proteins. The chain is HTH-type transcriptional regulator IscR from Photorhabdus laumondii subsp. laumondii (strain DSM 15139 / CIP 105565 / TT01) (Photorhabdus luminescens subsp. laumondii).